Consider the following 276-residue polypeptide: Putative pyridoxine kinase (276 aa).

N139 contributes to the ATP binding site. E142 serves as a coordination point for Mg(2+). ATP contacts are provided by residues K176–A180, D188, G213, and K238.

This sequence belongs to the ThiD family.

It carries out the reaction pyridoxal + ATP = pyridoxal 5'-phosphate + ADP + H(+). Phosphorylates B6 vitamers; functions in a salvage pathway. Uses pyridoxal, pyridoxine, and pyridoxamine as substrates. The chain is Putative pyridoxine kinase (pdxK) from Staphylococcus aureus (strain COL).